The sequence spans 330 residues: Delta-aminolevulinic acid dehydratase (330 aa).

Positions 122, 124, 131, and 132 each coordinate Zn(2+). Catalysis depends on K199, which acts as the Schiff-base intermediate with substrate. An N6-succinyllysine modification is found at K199. R209 contacts 5-aminolevulinate. Residue S215 is modified to Phosphoserine. R221 contacts 5-aminolevulinate. C223 is a binding site for Zn(2+). K252 (schiff-base intermediate with substrate) is an active-site residue. K252 carries the N6-succinyllysine modification. Residues S279 and Y318 each contribute to the 5-aminolevulinate site.

The protein belongs to the ALAD family. In terms of assembly, homooctamer; active form. Homohexamer; low activity form. The cofactor is Zn(2+).

The protein resides in the cytoplasm. The protein localises to the cytosol. The catalysed reaction is 2 5-aminolevulinate = porphobilinogen + 2 H2O + H(+). It functions in the pathway porphyrin-containing compound metabolism; protoporphyrin-IX biosynthesis; coproporphyrinogen-III from 5-aminolevulinate: step 1/4. With respect to regulation, can alternate between a fully active homooctamer and a low-activity homohexamer. A bound magnesium ion may promote the assembly of the fully active homooctamer. The magnesium-binding site is absent in the low-activity homohexamer. Inhibited by compounds that favor the hexameric state. Inhibited by divalent lead ions. The lead ions partially displace the zinc cofactor. In terms of biological role, catalyzes an early step in the biosynthesis of tetrapyrroles. Binds two molecules of 5-aminolevulinate per subunit, each at a distinct site, and catalyzes their condensation to form porphobilinogen. The chain is Delta-aminolevulinic acid dehydratase (ALAD) from Macaca fascicularis (Crab-eating macaque).